Reading from the N-terminus, the 432-residue chain is 23S rRNA (uracil(1939)-C(5))-methyltransferase RlmD (432 aa).

One can recognise a TRAM domain in the interval 10–68 (RVTTREIITVTTDGLDAFGQGVARHHGKALFIAGLLPGERAEVVLSEDKKQFARGDVKK). [4Fe-4S] cluster contacts are provided by Cys81, Cys87, Cys90, and Cys162. Residues Gln265, Phe294, Asn299, Glu315, Asn342, and Asp363 each contribute to the S-adenosyl-L-methionine site. The Nucleophile role is filled by Cys389.

The protein belongs to the class I-like SAM-binding methyltransferase superfamily. RNA M5U methyltransferase family. RlmD subfamily.

The enzyme catalyses uridine(1939) in 23S rRNA + S-adenosyl-L-methionine = 5-methyluridine(1939) in 23S rRNA + S-adenosyl-L-homocysteine + H(+). In terms of biological role, catalyzes the formation of 5-methyl-uridine at position 1939 (m5U1939) in 23S rRNA. The chain is 23S rRNA (uracil(1939)-C(5))-methyltransferase RlmD from Cronobacter sakazakii (strain ATCC BAA-894) (Enterobacter sakazakii).